The primary structure comprises 123 residues: Small ribosomal subunit protein uS12c (123 aa).

The protein belongs to the universal ribosomal protein uS12 family. In terms of assembly, part of the 30S ribosomal subunit.

The protein resides in the plastid. It is found in the chloroplast. With S4 and S5 plays an important role in translational accuracy. Located at the interface of the 30S and 50S subunits. The protein is Small ribosomal subunit protein uS12c (rps12) of Oenothera elata subsp. hookeri (Hooker's evening primrose).